The following is a 290-amino-acid chain: Probable lipid hydrolase 463L (290 aa).

2 helical membrane passes run 26-46 and 53-73; these read TLVL…LNGL and ISTF…SIGY. Positions 27 to 207 constitute a PNPLA domain; sequence LVLSGGAMRG…WNNFPIDIAI (181 aa). A GXSXG motif is present at residues 58 to 62; sequence GISSG. Catalysis depends on S60, which acts as the Nucleophile. The Proton acceptor role is filled by D194. The short motif at 194–196 is the DGA/G element; it reads DGG.

The protein localises to the membrane. Functionally, probable lipid hydrolase. The polypeptide is Probable lipid hydrolase 463L (Invertebrate iridescent virus 6 (IIV-6)).